Reading from the N-terminus, the 476-residue chain is uncharacterized protein (476 aa).

One can recognise a LisH domain in the interval 7–39; that stretch reads SRFYTNLLIANYLKHNGLEDTLAAFIRETALPL.

This is an uncharacterized protein from Saccharomyces cerevisiae (strain ATCC 204508 / S288c) (Baker's yeast).